Reading from the N-terminus, the 85-residue chain is Cytochrome c6 (85 aa).

Residues Cys-14, Cys-17, His-18, and Met-58 each contribute to the heme c site.

Belongs to the cytochrome c family. PetJ subfamily. Monomer. Binds 1 heme c group covalently per subunit.

Its subcellular location is the plastid. The protein resides in the chloroplast thylakoid lumen. Functionally, functions as an electron carrier between membrane-bound cytochrome b6-f and photosystem I in oxygenic photosynthesis. The protein is Cytochrome c6 (petJ) of Petalonia fascia (False kelp).